Consider the following 162-residue polypeptide: Retinoic acid receptor responder protein 2 (162 aa).

Positions 1-20 are cleaved as a signal peptide; it reads MKCLLISLALWLGTVGTRGT. Intrachain disulfides connect C79/C89, C100/C119, and C103/C134. Positions 157–162 are excised as a propeptide; that stretch reads RALRTK.

Post-translationally, secreted in an inactive precursor form, prochemerin, which is proteolytically processed by a variety of extracellular proteases to generate forms with differing levels of bioactivity. For example, the removal of six amino acids results in chemerin-156, which exhibits the highest activity, while removal of seven amino acids results in chemerin-155 which has slightly less activity. Some proteases are able to cleave at more than one site and chemerin forms may be sequentially processed by different enzymes to modulate activity levels. The coordinated expression and activity of chemerin-modifying enzymes is essential for regulating its bioactivation, inactivation and, consequently, biological function. Cathepsin G cleaves seven C-terminal amino acids from prochemerin (chemerin-155), elastase is able to cleave six (chemerin-156), eight (chemerin-154) or eleven (chemerin-151), plasmin cleaves five amino acids (chemerin-157), and tryptase cleaves five (chemerin-157) or eight (chemerin-154). Multiple cleavages might be required to fully activate chemerin, with an initial tryptase cleavage resulting in chemerin with low activity (chemerin-157), and a second cleavage by carboxypeptidase N or B producing highly active chemerin (chemerin-156). As to expression, expressed in the differentiated adipocytes (at protein level). Abundantly expressed in the liver, adipose tissue including visceral, epididymal, and brown adipose tissue.

The protein resides in the secreted. Adipocyte-secreted protein (adipokine) that regulates adipogenesis, metabolism and inflammation through activation of the chemokine-like receptor 1 (CMKLR1). Also acts as a ligand for CMKLR2. Can also bind to C-C chemokine receptor-like 2 (CCRL2), but with a lower affinity than it does to CMKLR1 or CMKLR2. Positively regulates adipocyte differentiation, modulates the expression of adipocyte genes involved in lipid and glucose metabolism and might play a role in angiogenesis, a process essential for the expansion of white adipose tissue. Also acts as a pro-inflammatory adipokine, causing an increase in secretion of pro-inflammatory and prodiabetic adipokines, which further impair adipose tissue metabolic function and have negative systemic effects including impaired insulin sensitivity, altered glucose and lipid metabolism, and a decrease in vascular function in other tissues. Can have both pro- and anti-inflammatory properties depending on the modality of enzymatic cleavage by different classes of proteases. Acts as a chemotactic factor for leukocyte populations expressing CMKLR1, particularly immature plasmacytoid dendritic cells, but also immature myeloid DCs, macrophages and natural killer cells. Exerts an anti-inflammatory role by preventing TNF/TNFA-induced VCAM1 expression and monocytes adhesion in vascular endothelial cells. The effect is mediated via inhibiting activation of NF-kappa-B and CRK/p38 through stimulation of AKT1/NOS3 signaling and nitric oxide production. Exhibits an antimicrobial function in the skin. In Mus musculus (Mouse), this protein is Retinoic acid receptor responder protein 2 (Rarres2).